The primary structure comprises 306 residues: Acetyl-coenzyme A carboxylase carboxyl transferase subunit beta (306 aa).

The 270-residue stretch at 25 to 294 (LWIKDPTSGE…APEPSHAFSK (270 aa)) folds into the CoA carboxyltransferase N-terminal domain. Residues 287-306 (EPSHAFSKDSQTQISKTKAA) form a disordered region. A compositionally biased stretch (polar residues) spans 294-306 (KDSQTQISKTKAA).

The protein belongs to the AccD/PCCB family. In terms of assembly, acetyl-CoA carboxylase is a heterohexamer composed of biotin carboxyl carrier protein (AccB), biotin carboxylase (AccC) and two subunits each of ACCase subunit alpha (AccA) and ACCase subunit beta (AccD).

The protein localises to the cytoplasm. It carries out the reaction N(6)-carboxybiotinyl-L-lysyl-[protein] + acetyl-CoA = N(6)-biotinyl-L-lysyl-[protein] + malonyl-CoA. It participates in lipid metabolism; malonyl-CoA biosynthesis; malonyl-CoA from acetyl-CoA: step 1/1. Component of the acetyl coenzyme A carboxylase (ACC) complex. Biotin carboxylase (BC) catalyzes the carboxylation of biotin on its carrier protein (BCCP) and then the CO(2) group is transferred by the transcarboxylase to acetyl-CoA to form malonyl-CoA. This chain is Acetyl-coenzyme A carboxylase carboxyl transferase subunit beta, found in Bartonella bacilliformis (strain ATCC 35685 / KC583 / Herrer 020/F12,63).